The following is a 119-amino-acid chain: C-C motif chemokine 24 (119 aa).

A signal peptide spans 1 to 26; that stretch reads MAGLMTIVTSLLFLGVCAHHIIPTGS. 2 disulfides stabilise this stretch: Cys33–Cys58 and Cys34–Cys74. A glycan (N-linked (GlcNAc...) asparagine) is linked at Asn115.

It belongs to the intercrine beta (chemokine CC) family. Post-translationally, N-glycosylated. In terms of tissue distribution, activated monocytes and activated T lymphocytes.

It localises to the secreted. Chemotactic for resting T-lymphocytes, and eosinophils. Has lower chemotactic activity for neutrophils but none for monocytes and activated lymphocytes. Is a strong suppressor of colony formation by a multipotential hematopoietic progenitor cell line. Binds to CCR3. The protein is C-C motif chemokine 24 of Homo sapiens (Human).